A 189-amino-acid chain; its full sequence is UPF0340 protein EF_1967 (189 aa).

Belongs to the UPF0340 family.

This chain is UPF0340 protein EF_1967, found in Enterococcus faecalis (strain ATCC 700802 / V583).